Here is a 354-residue protein sequence, read N- to C-terminus: Protein RecA (354 aa).

67–74 (GPESSGKT) is a binding site for ATP.

Belongs to the RecA family.

It localises to the cytoplasm. In terms of biological role, can catalyze the hydrolysis of ATP in the presence of single-stranded DNA, the ATP-dependent uptake of single-stranded DNA by duplex DNA, and the ATP-dependent hybridization of homologous single-stranded DNAs. It interacts with LexA causing its activation and leading to its autocatalytic cleavage. The polypeptide is Protein RecA (Yersinia enterocolitica serotype O:8 / biotype 1B (strain NCTC 13174 / 8081)).